A 324-amino-acid polypeptide reads, in one-letter code: ATP-dependent 6-phosphofructokinase (324 aa).

An ATP-binding site is contributed by glycine 11. 21-25 (RAVVR) is an ADP binding site. ATP is bound by residues 72 to 73 (RE) and 102 to 105 (GNGS). Position 103 (asparagine 103) interacts with Mg(2+). 126–128 (TID) provides a ligand contact to substrate. The active-site Proton acceptor is aspartate 128. Arginine 155 contributes to the ADP binding site. Residues arginine 163 and 170–172 (MGR) contribute to the substrate site. ADP is bound by residues 186–188 (GAD), arginine 212, and 214–216 (KKF). Residues glutamate 223, arginine 248, and 254–257 (YIQR) each bind substrate.

The protein belongs to the phosphofructokinase type A (PFKA) family. ATP-dependent PFK group I subfamily. Prokaryotic clade 'B1' sub-subfamily. Homotetramer. Requires Mg(2+) as cofactor.

The protein resides in the cytoplasm. The catalysed reaction is beta-D-fructose 6-phosphate + ATP = beta-D-fructose 1,6-bisphosphate + ADP + H(+). It functions in the pathway carbohydrate degradation; glycolysis; D-glyceraldehyde 3-phosphate and glycerone phosphate from D-glucose: step 3/4. Its activity is regulated as follows. Allosterically activated by ADP and other diphosphonucleosides, and allosterically inhibited by phosphoenolpyruvate. Catalyzes the phosphorylation of D-fructose 6-phosphate to fructose 1,6-bisphosphate by ATP, the first committing step of glycolysis. This chain is ATP-dependent 6-phosphofructokinase, found in Persephonella marina (strain DSM 14350 / EX-H1).